A 204-amino-acid chain; its full sequence is uncharacterized protein (204 aa).

The next 6 helical transmembrane spans lie at 19 to 39 (TANPAPLGLLGFGITTILLNL), 42 to 62 (AGLFPINSMILAMGFAYGGIA), 78 to 98 (GTVAFGSYGLFWWSLVLLLVI), 116 to 136 (PVAMASYLFMWGLFTLLMFIA), 143 to 163 (GIQVIFISLAVLFFLLTAGEI), and 167 to 187 (ALITAVAGYEGIFTGAAAMYV).

Belongs to the acetate uptake transporter (AceTr) (TC 2.A.96) family.

It is found in the cell membrane. This is an uncharacterized protein from Methanothermobacter thermautotrophicus (strain ATCC 29096 / DSM 1053 / JCM 10044 / NBRC 100330 / Delta H) (Methanobacterium thermoautotrophicum).